Here is a 188-residue protein sequence, read N- to C-terminus: Methylamine dehydrogenase light chain (188 aa).

The segment at residues 1 to 57 (MLGNFRFDDMVEKLSRRVAGQTSRRSVIGKLGTAMLGIGLVPLLPVDRRGRVSRANA) is a signal peptide (tat-type signal). Disulfide bonds link cysteine 80–cysteine 145, cysteine 86–cysteine 118, cysteine 93–cysteine 178, cysteine 95–cysteine 143, cysteine 103–cysteine 134, and cysteine 135–cysteine 166. A Tryptophylquinone modification is found at tryptophan 114. The segment at residues 114–165 (WVASCYNPTDGQSYLIAYRDCCGYNVSGRCPCLNTEGELPVYRPEFANDIIW) is a cross-link (tryptophan tryptophylquinone (Trp-Trp)).

This sequence belongs to the aromatic amine dehydrogenase light chain family. As to quaternary structure, heterotetramer of two light and two heavy chains. The cofactor is tryptophan tryptophylquinone residue. Predicted to be exported by the Tat system. The position of the signal peptide cleavage has not been experimentally proven. Post-translationally, tryptophan tryptophylquinone (TTQ) is formed by oxidation of the indole ring of a tryptophan to form tryptophylquinone followed by covalent cross-linking with another tryptophan residue.

It is found in the periplasm. The enzyme catalyses 2 oxidized [amicyanin] + methylamine + H2O = 2 reduced [amicyanin] + formaldehyde + NH4(+) + 2 H(+). Its pathway is one-carbon metabolism; methylamine degradation; formaldehyde from methylamine: step 1/1. Functionally, methylamine dehydrogenase carries out the oxidation of methylamine. Electrons are passed from methylamine dehydrogenase to amicyanin. The sequence is that of Methylamine dehydrogenase light chain (mauA) from Paracoccus denitrificans.